The sequence spans 693 residues: MARDFSLKNTRNIGIMAHIDAGKTTTTERILYYTGRIHKIGETHEGASQMDWMEQEQDRGITITSAATTAQWQGHRVNIIDTPGHVDFTVEVERSLRVLDGAVTVLDAQSGVEPQTETVWRQATTYGVPRIVFVNKMDKLGANFEYSVSTLHDRLQANAAPIQLPIGAEDEFEAIIDLVEMKCFKYTNDLGTEIDEIEIPEDHKERAEEARAQLIEAVAENNDDLMEKYLGDEEISVDELKDAIRQATTDVEFYPVLCGTAFKNKGVQLMLNAVIDYLPSPLDVKPIIGHRANNPDEEVVAKPDDSAEFAALAFKVMTDPYVGKLTFFRVYSGTLSSGSYVKNSSKDKRERVGRLLQMHANSRQEIDTVYSGEIAAAVGLKETGTGDTLCGEKNDIILESMEFPEPVIHLSVEPKSKADQDKMTQALVKLQEEDPTFHAHTDEETGQVIIGGMGELHLDILVDRMKKEFNVECNVGAPMVSYRETFKQPAQVQGKFSRQSGGRGQYGDVHIEFTPNETGGGFEFENAIVGGVVPREYIPSVEQGLKDAMENGVLAGYPLIDVKAKLFDGSYHDVDSSEMAFKIAASLALKEAAKKCDPVILEPMMKVTIEMPEEYMGDIMGDVTARRGRVDGMEPRGNAQVVNAYVPLSEMFGYATSLRSNTQGRGTYTMYFDHYAEVPKSIAEEIIKKNKGE.

The region spanning Lys-8–Leu-282 is the tr-type G domain. GTP is bound by residues Ala-17–Thr-24, Asp-81–His-85, and Asn-135–Asp-138.

This sequence belongs to the TRAFAC class translation factor GTPase superfamily. Classic translation factor GTPase family. EF-G/EF-2 subfamily.

The protein resides in the cytoplasm. Catalyzes the GTP-dependent ribosomal translocation step during translation elongation. During this step, the ribosome changes from the pre-translocational (PRE) to the post-translocational (POST) state as the newly formed A-site-bound peptidyl-tRNA and P-site-bound deacylated tRNA move to the P and E sites, respectively. Catalyzes the coordinated movement of the two tRNA molecules, the mRNA and conformational changes in the ribosome. This chain is Elongation factor G, found in Staphylococcus epidermidis (strain ATCC 35984 / DSM 28319 / BCRC 17069 / CCUG 31568 / BM 3577 / RP62A).